The primary structure comprises 350 residues: Adenine deaminase (350 aa).

3 residues coordinate Zn(2+): histidine 24, histidine 26, and histidine 207. The Proton donor role is filled by glutamate 210. Zn(2+) is bound at residue aspartate 288. A substrate-binding site is contributed by aspartate 289.

Belongs to the metallo-dependent hydrolases superfamily. Adenosine and AMP deaminases family. Adenine deaminase type 2 subfamily. Zn(2+) serves as cofactor.

It carries out the reaction adenine + H2O + H(+) = hypoxanthine + NH4(+). Functionally, catalyzes the hydrolytic deamination of adenine to hypoxanthine. Plays an important role in the purine salvage pathway and in nitrogen catabolism. The sequence is that of Adenine deaminase from Paraburkholderia phytofirmans (strain DSM 17436 / LMG 22146 / PsJN) (Burkholderia phytofirmans).